The sequence spans 301 residues: tRNA pseudouridine synthase B (301 aa).

Aspartate 38 serves as the catalytic Nucleophile.

This sequence belongs to the pseudouridine synthase TruB family. Type 1 subfamily.

The catalysed reaction is uridine(55) in tRNA = pseudouridine(55) in tRNA. Functionally, responsible for synthesis of pseudouridine from uracil-55 in the psi GC loop of transfer RNAs. In Lacticaseibacillus paracasei (strain ATCC 334 / BCRC 17002 / CCUG 31169 / CIP 107868 / KCTC 3260 / NRRL B-441) (Lactobacillus paracasei), this protein is tRNA pseudouridine synthase B.